We begin with the raw amino-acid sequence, 463 residues long: ATP synthase subunit beta 1 (463 aa).

152–159 (GGAGVGKT) lines the ATP pocket.

The protein belongs to the ATPase alpha/beta chains family. In terms of assembly, F-type ATPases have 2 components, CF(1) - the catalytic core - and CF(0) - the membrane proton channel. CF(1) has five subunits: alpha(3), beta(3), gamma(1), delta(1), epsilon(1). CF(0) has three main subunits: a(1), b(2) and c(9-12). The alpha and beta chains form an alternating ring which encloses part of the gamma chain. CF(1) is attached to CF(0) by a central stalk formed by the gamma and epsilon chains, while a peripheral stalk is formed by the delta and b chains.

The protein localises to the cell inner membrane. It catalyses the reaction ATP + H2O + 4 H(+)(in) = ADP + phosphate + 5 H(+)(out). Functionally, produces ATP from ADP in the presence of a proton gradient across the membrane. The catalytic sites are hosted primarily by the beta subunits. The sequence is that of ATP synthase subunit beta 1 from Shewanella frigidimarina (strain NCIMB 400).